The following is a 220-amino-acid chain: Probable septum site-determining protein MinC (220 aa).

The protein belongs to the MinC family. In terms of assembly, interacts with MinD and FtsZ.

Functionally, cell division inhibitor that blocks the formation of polar Z ring septums. Rapidly oscillates between the poles of the cell to destabilize FtsZ filaments that have formed before they mature into polar Z rings. Prevents FtsZ polymerization. The polypeptide is Probable septum site-determining protein MinC (Prochlorococcus marinus subsp. pastoris (strain CCMP1986 / NIES-2087 / MED4)).